Consider the following 337-residue polypeptide: Ornithine carbamoyltransferase (337 aa).

Carbamoyl phosphate is bound by residues 56-59 (STRT), glutamine 83, arginine 107, and 134-137 (HPTQ). L-ornithine-binding positions include asparagine 168, aspartate 232, and 236–237 (SM). Carbamoyl phosphate-binding positions include 274–275 (CL) and arginine 320.

It belongs to the aspartate/ornithine carbamoyltransferase superfamily. OTCase family.

Its subcellular location is the cytoplasm. It catalyses the reaction carbamoyl phosphate + L-ornithine = L-citrulline + phosphate + H(+). It participates in amino-acid biosynthesis; L-arginine biosynthesis; L-arginine from L-ornithine and carbamoyl phosphate: step 1/3. In terms of biological role, reversibly catalyzes the transfer of the carbamoyl group from carbamoyl phosphate (CP) to the N(epsilon) atom of ornithine (ORN) to produce L-citrulline. The protein is Ornithine carbamoyltransferase of Shigella flexneri serotype 5b (strain 8401).